The following is a 344-amino-acid chain: Protein RecA (344 aa).

66-73 is an ATP binding site; that stretch reads GPESSGKT.

This sequence belongs to the RecA family.

The protein resides in the cytoplasm. Its function is as follows. Can catalyze the hydrolysis of ATP in the presence of single-stranded DNA, the ATP-dependent uptake of single-stranded DNA by duplex DNA, and the ATP-dependent hybridization of homologous single-stranded DNAs. It interacts with LexA causing its activation and leading to its autocatalytic cleavage. This chain is Protein RecA, found in Methylobacillus flagellatus (strain ATCC 51484 / DSM 6875 / VKM B-1610 / KT).